Here is a 202-residue protein sequence, read N- to C-terminus: UDP-N-acetylglucosamine transferase subunit ALG13 (202 aa).

It belongs to the glycosyltransferase 28 family. As to quaternary structure, heterodimer with ALG14 to form a functional enzyme.

Its subcellular location is the endoplasmic reticulum. It carries out the reaction an N-acetyl-alpha-D-glucosaminyl-diphospho-di-trans,poly-cis-dolichol + UDP-N-acetyl-alpha-D-glucosamine = an N,N'-diacetylchitobiosyl-diphospho-di-trans,poly-cis-dolichol + UDP + H(+). In terms of biological role, involved in protein N-glycosylation. Essential for the second step of the dolichol-linked oligosaccharide pathway. In Saccharomyces cerevisiae (strain ATCC 204508 / S288c) (Baker's yeast), this protein is UDP-N-acetylglucosamine transferase subunit ALG13 (ALG13).